The sequence spans 606 residues: Probable translation initiation factor IF-2 (606 aa).

Residues 11 to 230 (IRQPIVVVLG…LTGLVQRFMK (220 aa)) form the tr-type G domain. The interval 20 to 27 (GHVDHGKT) is G1. 20 to 27 (GHVDHGKT) provides a ligand contact to GTP. Residues 45–49 (EITQH) form a G2 region. The tract at residues 85–88 (DTPG) is G3. Residues 85–89 (DTPGH) and 139–142 (NKID) contribute to the GTP site. Residues 139 to 142 (NKID) are G4. The tract at residues 207-209 (SAK) is G5.

It belongs to the TRAFAC class translation factor GTPase superfamily. Classic translation factor GTPase family. IF-2 subfamily.

Functionally, function in general translation initiation by promoting the binding of the formylmethionine-tRNA to ribosomes. Seems to function along with eIF-2. This Staphylothermus marinus (strain ATCC 43588 / DSM 3639 / JCM 9404 / F1) protein is Probable translation initiation factor IF-2.